We begin with the raw amino-acid sequence, 401 residues long: Probable tRNA sulfurtransferase (401 aa).

Residues 63-168 (TTAEQALSCL…EREAFLYGAR (106 aa)) form the THUMP domain. ATP-binding positions include 186 to 187 (LL), 211 to 212 (YF), Arg-268, Gly-290, and Gln-299.

This sequence belongs to the ThiI family.

It localises to the cytoplasm. It catalyses the reaction [ThiI sulfur-carrier protein]-S-sulfanyl-L-cysteine + a uridine in tRNA + 2 reduced [2Fe-2S]-[ferredoxin] + ATP + H(+) = [ThiI sulfur-carrier protein]-L-cysteine + a 4-thiouridine in tRNA + 2 oxidized [2Fe-2S]-[ferredoxin] + AMP + diphosphate. It carries out the reaction [ThiS sulfur-carrier protein]-C-terminal Gly-Gly-AMP + S-sulfanyl-L-cysteinyl-[cysteine desulfurase] + AH2 = [ThiS sulfur-carrier protein]-C-terminal-Gly-aminoethanethioate + L-cysteinyl-[cysteine desulfurase] + A + AMP + 2 H(+). The protein operates within cofactor biosynthesis; thiamine diphosphate biosynthesis. In terms of biological role, catalyzes the ATP-dependent transfer of a sulfur to tRNA to produce 4-thiouridine in position 8 of tRNAs, which functions as a near-UV photosensor. Also catalyzes the transfer of sulfur to the sulfur carrier protein ThiS, forming ThiS-thiocarboxylate. This is a step in the synthesis of thiazole, in the thiamine biosynthesis pathway. The sulfur is donated as persulfide by IscS. This Treponema pallidum subsp. pallidum (strain SS14) protein is Probable tRNA sulfurtransferase.